The primary structure comprises 226 residues: ATP synthase F(0) complex subunit a (226 aa).

Helical transmembrane passes span 6 to 26 (FASFAAPTILGLPAAVLIILF), 68 to 88 (WSLMLVSLIIFIATTNLLGLL), 97 to 117 (QLSMNLAMAIPLWAGTVVMGF), 138 to 158 (IPMLIIIETISLFIQPMALAV), 164 to 184 (ITAGHLLMHLIGSATLALSTI), and 189 to 209 (TLIIFTILILLTVLEIAVALI).

Belongs to the ATPase A chain family. In terms of assembly, component of the ATP synthase complex composed at least of ATP5F1A/subunit alpha, ATP5F1B/subunit beta, ATP5MC1/subunit c (homooctomer), MT-ATP6/subunit a, MT-ATP8/subunit 8, ATP5ME/subunit e, ATP5MF/subunit f, ATP5MG/subunit g, ATP5MK/subunit k, ATP5MJ/subunit j, ATP5F1C/subunit gamma, ATP5F1D/subunit delta, ATP5F1E/subunit epsilon, ATP5PF/subunit F6, ATP5PB/subunit b, ATP5PD/subunit d, ATP5PO/subunit OSCP. ATP synthase complex consists of a soluble F(1) head domain (subunits alpha(3) and beta(3)) - the catalytic core - and a membrane F(0) domain - the membrane proton channel (subunits c, a, 8, e, f, g, k and j). These two domains are linked by a central stalk (subunits gamma, delta, and epsilon) rotating inside the F1 region and a stationary peripheral stalk (subunits F6, b, d, and OSCP). Interacts with DNAJC30; interaction is direct.

It localises to the mitochondrion inner membrane. The catalysed reaction is H(+)(in) = H(+)(out). Subunit a, of the mitochondrial membrane ATP synthase complex (F(1)F(0) ATP synthase or Complex V) that produces ATP from ADP in the presence of a proton gradient across the membrane which is generated by electron transport complexes of the respiratory chain. ATP synthase complex consist of a soluble F(1) head domain - the catalytic core - and a membrane F(1) domain - the membrane proton channel. These two domains are linked by a central stalk rotating inside the F(1) region and a stationary peripheral stalk. During catalysis, ATP synthesis in the catalytic domain of F(1) is coupled via a rotary mechanism of the central stalk subunits to proton translocation. With the subunit c (ATP5MC1), forms the proton-conducting channel in the F(0) domain, that contains two crucial half-channels (inlet and outlet) that facilitate proton movement from the mitochondrial intermembrane space (IMS) into the matrix. Protons are taken up via the inlet half-channel and released through the outlet half-channel, following a Grotthuss mechanism. The protein is ATP synthase F(0) complex subunit a of Pan paniscus (Pygmy chimpanzee).